A 161-amino-acid polypeptide reads, in one-letter code: Protein ilm1 (161 aa).

Residues 1–6 (MLFSFR) lie on the Cytoplasmic side of the membrane. The helical transmembrane segment at 7–27 (AIVLFYCCMLTFAGIGFLWNP) threads the bilayer. At 28–56 (KFVVESGLVALIGASMEVKPLIVTQDNLS) the chain is on the lumenal side. Residues 57–77 (TLALSGLVFLILGMIYTISLL) form a helical membrane-spanning segment. The Cytoplasmic segment spans residues 78-81 (QSNF). The chain crosses the membrane as a helical span at residues 82 to 102 (LFFSGITPIRAIFDFILTGFI). At 103–112 (YLKKEHIASN) the chain is on the lumenal side. The helical transmembrane segment at 113–133 (SLTFTFAFCDLMWQFWMFAAM) threads the bilayer. Over 134 to 161 (SEERAKYLKNQKKAEELAARKAREVEES) the chain is Cytoplasmic.

It belongs to the ILM1 family.

It is found in the endoplasmic reticulum. The protein localises to the membrane. The chain is Protein ilm1 from Schizosaccharomyces pombe (strain 972 / ATCC 24843) (Fission yeast).